We begin with the raw amino-acid sequence, 365 residues long: MKKALLFSLISMVGFSPASQATQVLNGYWGYQEFLDEFPEQRNLTNALSEAVRAQPVPLSKPTQRPIKISVVYPGQQVSDYWVRNIASFEKRLYKLNINYQLNQVFTRPNADIKQQSLSLMEALKSKSDYLIFTLDTTRHRKFVEHVLDSTNTKLILQNITTPVREWDKHQPFLYVGFDHAEGSRELATEFGKFFPKHTYYSVLYFSEGYISDVRGDTFIHQVNRDNNFELQSAYYTKATKQSGYDAAKASLAKHPDVDFIYACSTDVALGAVDALAELGREDIMINGWGGGSAELDAIQKGDLDITVMRMNDDTGIAMAEAIKWDLEDKPVPTVYSGDFEIVTKADSPERIEALKKRAFRYSDN.

A signal peptide spans 1–23; that stretch reads MKKALLFSLISMVGFSPASQATQ.

This sequence belongs to the bacterial solute-binding protein 2 family.

It is found in the periplasm. Its function is as follows. Binds to the signaling molecule autoinducer 2 (AI-2), a furanosyl borate diester, (3a-methyl-5,6-dihydrofuro-[2,3d][1,3,2]dioxaborole-2,2,6,6a-tetraol). This complex then interacts with the LuxQ sensor protein. The polypeptide is Autoinducer 2-binding periplasmic protein LuxP (luxP) (Vibrio harveyi (Beneckea harveyi)).